A 285-amino-acid chain; its full sequence is GTP-binding protein 8 (285 aa).

The EngB-type G domain maps to 110–283; the sequence is QQPEVCFIGR…KCFIADITGS (174 aa). Residues 118–125, 147–151, 165–168, 227–230, and 262–264 contribute to the GTP site; these read GRSNVGKS, GHTKK, DMPG, TKID, and ISA. 2 residues coordinate Mg(2+): Ser-125 and Thr-149.

This sequence belongs to the TRAFAC class TrmE-Era-EngA-EngB-Septin-like GTPase superfamily. EngB GTPase family. Mg(2+) is required as a cofactor.

This is GTP-binding protein 8 (Gtpbp8) from Mus musculus (Mouse).